A 288-amino-acid polypeptide reads, in one-letter code: Energy-coupling factor transporter ATP-binding protein EcfA2 (288 aa).

The 244-residue stretch at 3–246 folds into the ABC transporter domain; it reads IKLEQLGYCY…PDALVDLGLS (244 aa). An ATP-binding site is contributed by 40 to 47; sequence GHTGSGKS.

This sequence belongs to the ABC transporter superfamily. Energy-coupling factor EcfA family. Forms a stable energy-coupling factor (ECF) transporter complex composed of 2 membrane-embedded substrate-binding proteins (S component), 2 ATP-binding proteins (A component) and 2 transmembrane proteins (T component).

The protein localises to the cell membrane. Functionally, ATP-binding (A) component of a common energy-coupling factor (ECF) ABC-transporter complex. Unlike classic ABC transporters this ECF transporter provides the energy necessary to transport a number of different substrates. The protein is Energy-coupling factor transporter ATP-binding protein EcfA2 of Listeria welshimeri serovar 6b (strain ATCC 35897 / DSM 20650 / CCUG 15529 / CIP 8149 / NCTC 11857 / SLCC 5334 / V8).